Consider the following 418-residue polypeptide: rRNA methyltransferase 3, mitochondrial (418 aa).

The transit peptide at 1–40 (MAAPAKGMWCSLGSLLRVVQTRDLNARRWVRALRRSPVRV) directs the protein to the mitochondrion. The segment at 41–90 (LSPSGQVEERKRAPDQQPRKAVPKASSQGQRQKQPLETSPSQTPHTWEEA) is disordered. The segment covering 47 to 58 (VEERKRAPDQQP) has biased composition (basic and acidic residues). The segment covering 65–85 (ASSQGQRQKQPLETSPSQTPH) has biased composition (polar residues). S-adenosyl-L-methionine is bound by residues glycine 354, isoleucine 378, and leucine 387.

Belongs to the class IV-like SAM-binding methyltransferase superfamily. RNA methyltransferase TrmH family.

The protein localises to the mitochondrion. The enzyme catalyses guanosine(1370) in 16S rRNA + S-adenosyl-L-methionine = 2'-O-methylguanosine(1370) in 16S rRNA + S-adenosyl-L-homocysteine + H(+). Functionally, S-adenosyl-L-methionine-dependent 2'-O-ribose methyltransferase that catalyzes the formation of 2'-O-methylguanosine at position 1370 (Gm1370) in the 16S mitochondrial large subunit ribosomal RNA (mtLSU rRNA), a conserved modification in the peptidyl transferase domain of the mtLSU rRNA. Also required for formation of 2'-O-methyluridine at position 1369 (Um1369) mediated by MRM2. This chain is rRNA methyltransferase 3, mitochondrial, found in Mus musculus (Mouse).